The chain runs to 309 residues: Ecto-ADP-ribosyltransferase 5 (309 aa).

An N-terminal signal peptide occupies residues 1 to 23 (MILEDLLMVLSCLSLHALWKVRA). Cys43 and Cys259 form a disulfide bridge. The region spanning 63-253 (ALLRESWEAA…IVTLWSYDQT (191 aa)) is the TR mART core domain. Tyr100 is an NAD(+) binding site. N-linked (GlcNAc...) asparagine glycosylation is present at Asn102. NAD(+) contacts are provided by Arg161 and Gln181. Arg161 is an active-site residue. Ser184 is an active-site residue. Asn197 carries N-linked (GlcNAc...) asparagine glycosylation. Residue Ser215 coordinates NAD(+). Glu222 is a catalytic residue.

This sequence belongs to the Arg-specific ADP-ribosyltransferase family. Abundantly expressed in testis. Lower levels in cardiac and skeletal muscle.

The protein localises to the secreted. The protein resides in the membrane. It carries out the reaction L-arginyl-[protein] + NAD(+) = N(omega)-(ADP-D-ribosyl)-L-arginyl-[protein] + nicotinamide + H(+). The protein is Ecto-ADP-ribosyltransferase 5 (Art5) of Mus musculus (Mouse).